A 295-amino-acid chain; its full sequence is Deleted in azoospermia-like (295 aa).

Residues 1–10 (MSTANPETPN) are compositionally biased toward polar residues. The interval 1 to 25 (MSTANPETPNSTISREASTQSSSAA) is disordered. Low complexity predominate over residues 11-25 (STISREASTQSSSAA). Positions 40-115 (NTVFVGGIDV…KKLKLGPAIR (76 aa)) constitute an RRM domain. The interval 80-132 (KGYGFVSFFNDVDVQKIVESQINFHGKKLKLGPAIRKQNLCAYHVQPRPLVFN) is homodimerization. A DAZ domain is found at 167–190 (AYPTYPNSPVQVITGYQLPVYNYQ). The residue at position 276 (tyrosine 276) is a Phosphotyrosine.

This sequence belongs to the RRM DAZ family. Homodimer and heterodimer. Multiple DAZL RRMs can bind to a single RNA containing multiple GUU triplets. Forms a heterodimer with DAZ. Interacts with BOLL, DAZAP1 and DAZAP2. Interacts with PUM2. In terms of tissue distribution, testis specific.

Its subcellular location is the cytoplasm. It is found in the nucleus. RNA-binding protein, which is essential for gametogenesis in both males and females. Plays a central role during spermatogenesis. Acts by binding to the 3'-UTR of mRNA, specifically recognizing GUU triplets, and thereby regulating the translation of key transcripts. In Homo sapiens (Human), this protein is Deleted in azoospermia-like (DAZL).